The sequence spans 20 residues: Outer membrane protein 40Va (20 aa).

Belongs to the Gram-negative porin family. In terms of assembly, homotrimer.

It localises to the cell outer membrane. Forms pores that allow passive diffusion of small molecules across the outer membrane. This Vibrio alginolyticus protein is Outer membrane protein 40Va.